The primary structure comprises 81 residues: Putative membrane protein insertion efficiency factor (81 aa).

This sequence belongs to the UPF0161 family.

It is found in the cell inner membrane. Functionally, could be involved in insertion of integral membrane proteins into the membrane. This Legionella pneumophila subsp. pneumophila (strain Philadelphia 1 / ATCC 33152 / DSM 7513) protein is Putative membrane protein insertion efficiency factor.